We begin with the raw amino-acid sequence, 358 residues long: MPFTLTLKPKKAKGGQVYYPLQLNVVSKPAPGPNEVLIQLEAAALNHRDFFLRQNLYPGLSFKSPMLSDGCGTVVELGPGCTTASNQLLGKKVILTPFRGWDSDPEGPEDYSNFSTIGGVEPHFDLGMAQNYISVHESEVELLPEHLNHIEGAALPCCGITAWRALVTKSGNAKPGRNILVTGIGGGVAIQTLLFGVAMGCNMYVSSSSDEKLAKARELGAVGTVNYKTDSDSWDKTLGSLLPAERPYLDAVIDGAGGNIVTKALTVLKPGGVIVCYGMTVGPVMDWPMQAALKNVDLRGTMVGSRAEFREMVEFISTHKIKPVISRTVRGLDCVDAIDGLFEDIRTGKQFGKLVIEI.

Belongs to the zinc-containing alcohol dehydrogenase family. Quinone oxidoreductase subfamily.

It participates in secondary metabolite biosynthesis. Zinc-type alcohol dehydrogenase-like protein; part of the gene cluster that mediates the biosynthesis of phomenoic acid, a long chain aliphatic carboxylic acid that does not appear to be essential for pathogenicity but may play a role in allowing to outcompete other fungi in the environmental niche via its antifungal properties. The polyketide synthase produces the long methylated aliphatic carboxylic acid chain of phomenoic acid. The cluster-specific cytochrome P450 monooxygenase may then hydroxylate the methyl group of carbon 31. The putative dehydrogenase YogA, which has no obvious role in phomenoic acid biosynthesis, may further modify phomenoic acid to produce a compound not identified yet. In Leptosphaeria maculans (strain JN3 / isolate v23.1.3 / race Av1-4-5-6-7-8) (Blackleg fungus), this protein is Zinc-type alcohol dehydrogenase-like protein YogA.